Consider the following 602-residue polypeptide: Elongation factor 4 (602 aa).

A tr-type G domain is found at 8–189 (KNIRNFSIIA…KIITTIPAPS (182 aa)). Residues 20-25 (DHGKST) and 136-139 (NKID) contribute to the GTP site.

Belongs to the TRAFAC class translation factor GTPase superfamily. Classic translation factor GTPase family. LepA subfamily.

Its subcellular location is the cell inner membrane. The catalysed reaction is GTP + H2O = GDP + phosphate + H(+). In terms of biological role, required for accurate and efficient protein synthesis under certain stress conditions. May act as a fidelity factor of the translation reaction, by catalyzing a one-codon backward translocation of tRNAs on improperly translocated ribosomes. Back-translocation proceeds from a post-translocation (POST) complex to a pre-translocation (PRE) complex, thus giving elongation factor G a second chance to translocate the tRNAs correctly. Binds to ribosomes in a GTP-dependent manner. The sequence is that of Elongation factor 4 from Helicobacter pylori (strain Shi470).